The sequence spans 394 residues: Argininosuccinate synthase (394 aa).

8–16 (AYSGGLDTS) lines the ATP pocket. The L-citrulline site is built by Y86 and S91. G116 is a binding site for ATP. Positions 118, 122, and 123 each coordinate L-aspartate. N122 is an L-citrulline binding site. L-citrulline-binding residues include R126, S172, S181, E257, and Y269.

It belongs to the argininosuccinate synthase family. Type 1 subfamily. In terms of assembly, homotetramer.

Its subcellular location is the cytoplasm. The catalysed reaction is L-citrulline + L-aspartate + ATP = 2-(N(omega)-L-arginino)succinate + AMP + diphosphate + H(+). Its pathway is amino-acid biosynthesis; L-arginine biosynthesis; L-arginine from L-ornithine and carbamoyl phosphate: step 2/3. The sequence is that of Argininosuccinate synthase from Methanosarcina mazei (strain ATCC BAA-159 / DSM 3647 / Goe1 / Go1 / JCM 11833 / OCM 88) (Methanosarcina frisia).